The sequence spans 460 residues: Phosphoenolpyruvate carboxylase (460 aa).

The protein belongs to the PEPCase type 2 family. As to quaternary structure, homotetramer. It depends on Mg(2+) as a cofactor.

It catalyses the reaction oxaloacetate + phosphate = phosphoenolpyruvate + hydrogencarbonate. Functionally, catalyzes the irreversible beta-carboxylation of phosphoenolpyruvate (PEP) to form oxaloacetate (OAA), a four-carbon dicarboxylic acid source for the tricarboxylic acid cycle. The chain is Phosphoenolpyruvate carboxylase from Pyrobaculum aerophilum (strain ATCC 51768 / DSM 7523 / JCM 9630 / CIP 104966 / NBRC 100827 / IM2).